A 559-amino-acid polypeptide reads, in one-letter code: Glucose-6-phosphate isomerase (559 aa).

Glutamate 363 serves as the catalytic Proton donor. Active-site residues include histidine 394 and lysine 523.

It belongs to the GPI family.

The protein localises to the cytoplasm. It carries out the reaction alpha-D-glucose 6-phosphate = beta-D-fructose 6-phosphate. It participates in carbohydrate biosynthesis; gluconeogenesis. Its pathway is carbohydrate degradation; glycolysis; D-glyceraldehyde 3-phosphate and glycerone phosphate from D-glucose: step 2/4. In terms of biological role, catalyzes the reversible isomerization of glucose-6-phosphate to fructose-6-phosphate. The sequence is that of Glucose-6-phosphate isomerase from Bartonella quintana (strain Toulouse) (Rochalimaea quintana).